The following is a 40-amino-acid chain: TITPSLKGFFIGLLSGAVVLGLTFAVLIAISQIDKVQRSL.

Residues 1–11 (TITPSLKGFFI) are Lumenal-facing. The chain crosses the membrane as a helical span at residues 12–28 (GLLSGAVVLGLTFAVLI). At 29-40 (AISQIDKVQRSL) the chain is on the cytoplasmic side.

It belongs to the PsbX family. Type 1 subfamily. As to quaternary structure, PSII is composed of 1 copy each of membrane proteins PsbA, PsbB, PsbC, PsbD, PsbE, PsbF, PsbH, PsbI, PsbJ, PsbK, PsbL, PsbM, PsbT, PsbX, PsbY, PsbZ, Psb30/Ycf12, peripheral proteins PsbO, CyanoQ (PsbQ), PsbU, PsbV and a large number of cofactors. It forms dimeric complexes. PSII binds multiple chlorophylls, carotenoids and specific lipids. serves as cofactor.

The protein localises to the cellular thylakoid membrane. Its function is as follows. Involved in the binding and/or turnover of quinones at the Q(B) site of photosystem II (PSII). PSII is a light-driven water plastoquinone oxidoreductase, using light energy to abstract electrons from H(2)O, generating a proton gradient subsequently used for ATP formation. The polypeptide is Photosystem II reaction center protein X (Thermostichus vulcanus (Synechococcus vulcanus)).